A 226-amino-acid polypeptide reads, in one-letter code: ATP synthase F(0) complex subunit a (226 aa).

6 helical membrane-spanning segments follow: residues 12 to 32, 68 to 88, 97 to 117, 138 to 158, 164 to 184, and 189 to 209; these read PTMM…ILFP, WTLM…LGLL, QLSM…VTGF, IPML…ALAV, ITAG…LMSI, and ASIT…VALI.

This sequence belongs to the ATPase A chain family. In terms of assembly, component of the ATP synthase complex composed at least of ATP5F1A/subunit alpha, ATP5F1B/subunit beta, ATP5MC1/subunit c (homooctomer), MT-ATP6/subunit a, MT-ATP8/subunit 8, ATP5ME/subunit e, ATP5MF/subunit f, ATP5MG/subunit g, ATP5MK/subunit k, ATP5MJ/subunit j, ATP5F1C/subunit gamma, ATP5F1D/subunit delta, ATP5F1E/subunit epsilon, ATP5PF/subunit F6, ATP5PB/subunit b, ATP5PD/subunit d, ATP5PO/subunit OSCP. ATP synthase complex consists of a soluble F(1) head domain (subunits alpha(3) and beta(3)) - the catalytic core - and a membrane F(0) domain - the membrane proton channel (subunits c, a, 8, e, f, g, k and j). These two domains are linked by a central stalk (subunits gamma, delta, and epsilon) rotating inside the F1 region and a stationary peripheral stalk (subunits F6, b, d, and OSCP). Interacts with DNAJC30; interaction is direct.

It localises to the mitochondrion inner membrane. The enzyme catalyses H(+)(in) = H(+)(out). In terms of biological role, subunit a, of the mitochondrial membrane ATP synthase complex (F(1)F(0) ATP synthase or Complex V) that produces ATP from ADP in the presence of a proton gradient across the membrane which is generated by electron transport complexes of the respiratory chain. ATP synthase complex consist of a soluble F(1) head domain - the catalytic core - and a membrane F(1) domain - the membrane proton channel. These two domains are linked by a central stalk rotating inside the F(1) region and a stationary peripheral stalk. During catalysis, ATP synthesis in the catalytic domain of F(1) is coupled via a rotary mechanism of the central stalk subunits to proton translocation. With the subunit c (ATP5MC1), forms the proton-conducting channel in the F(0) domain, that contains two crucial half-channels (inlet and outlet) that facilitate proton movement from the mitochondrial intermembrane space (IMS) into the matrix. Protons are taken up via the inlet half-channel and released through the outlet half-channel, following a Grotthuss mechanism. The protein is ATP synthase F(0) complex subunit a of Dasypus novemcinctus (Nine-banded armadillo).